A 228-amino-acid chain; its full sequence is Glyceraldehyde 3-phosphate phosphatase (228 aa).

This sequence belongs to the HAD-like hydrolase superfamily. It depends on Mg(2+) as a cofactor.

Catalyzes the dephosphorylation of D,L-glyceraldehyde 3-phosphate in vitro. The sequence is that of Glyceraldehyde 3-phosphate phosphatase from Methanocaldococcus jannaschii (strain ATCC 43067 / DSM 2661 / JAL-1 / JCM 10045 / NBRC 100440) (Methanococcus jannaschii).